Reading from the N-terminus, the 242-residue chain is Carboxy-S-adenosyl-L-methionine synthase (242 aa).

S-adenosyl-L-methionine-binding positions include Y39, 64–66 (GCS), 89–90 (DN), 117–118 (DI), N132, and R199.

Belongs to the class I-like SAM-binding methyltransferase superfamily. Cx-SAM synthase family. As to quaternary structure, homodimer.

The catalysed reaction is prephenate + S-adenosyl-L-methionine = carboxy-S-adenosyl-L-methionine + 3-phenylpyruvate + H2O. Functionally, catalyzes the conversion of S-adenosyl-L-methionine (SAM) to carboxy-S-adenosyl-L-methionine (Cx-SAM). The chain is Carboxy-S-adenosyl-L-methionine synthase from Aliivibrio fischeri (strain ATCC 700601 / ES114) (Vibrio fischeri).